Reading from the N-terminus, the 385-residue chain is 8-amino-7-oxononanoate synthase (385 aa).

Arg21 serves as a coordination point for substrate. Residue 108–109 (GF) coordinates pyridoxal 5'-phosphate. His133 lines the substrate pocket. Pyridoxal 5'-phosphate-binding residues include Ser179, His207, and Thr233. Lys236 carries the N6-(pyridoxal phosphate)lysine modification. Thr352 is a binding site for substrate.

The protein belongs to the class-II pyridoxal-phosphate-dependent aminotransferase family. BioF subfamily. Homodimer. It depends on pyridoxal 5'-phosphate as a cofactor.

The catalysed reaction is 6-carboxyhexanoyl-[ACP] + L-alanine + H(+) = (8S)-8-amino-7-oxononanoate + holo-[ACP] + CO2. It functions in the pathway cofactor biosynthesis; biotin biosynthesis. Functionally, catalyzes the decarboxylative condensation of pimeloyl-[acyl-carrier protein] and L-alanine to produce 8-amino-7-oxononanoate (AON), [acyl-carrier protein], and carbon dioxide. The polypeptide is 8-amino-7-oxononanoate synthase (Salmonella dublin (strain CT_02021853)).